Reading from the N-terminus, the 98-residue chain is Large ribosomal subunit protein uL23 (98 aa).

This sequence belongs to the universal ribosomal protein uL23 family. Part of the 50S ribosomal subunit. Contacts protein L29, and trigger factor when it is bound to the ribosome.

One of the early assembly proteins it binds 23S rRNA. One of the proteins that surrounds the polypeptide exit tunnel on the outside of the ribosome. Forms the main docking site for trigger factor binding to the ribosome. The sequence is that of Large ribosomal subunit protein uL23 from Borrelia garinii subsp. bavariensis (strain ATCC BAA-2496 / DSM 23469 / PBi) (Borreliella bavariensis).